The sequence spans 294 residues: 4-hydroxy-tetrahydrodipicolinate synthase (294 aa).

Pyruvate is bound at residue Thr-47. Residue Tyr-135 is the Proton donor/acceptor of the active site. The active-site Schiff-base intermediate with substrate is Lys-163. Pyruvate is bound at residue Ile-205.

The protein belongs to the DapA family. In terms of assembly, homotetramer; dimer of dimers.

It is found in the cytoplasm. It carries out the reaction L-aspartate 4-semialdehyde + pyruvate = (2S,4S)-4-hydroxy-2,3,4,5-tetrahydrodipicolinate + H2O + H(+). It participates in amino-acid biosynthesis; L-lysine biosynthesis via DAP pathway; (S)-tetrahydrodipicolinate from L-aspartate: step 3/4. In terms of biological role, catalyzes the condensation of (S)-aspartate-beta-semialdehyde [(S)-ASA] and pyruvate to 4-hydroxy-tetrahydrodipicolinate (HTPA). The sequence is that of 4-hydroxy-tetrahydrodipicolinate synthase from Rickettsia prowazekii (strain Madrid E).